The sequence spans 439 residues: Tol-Pal system protein TolB (439 aa).

The N-terminal stretch at 1–22 (MTKFPRWLAMLVGLLFPLSALT) is a signal peptide.

It belongs to the TolB family. The Tol-Pal system is composed of five core proteins: the inner membrane proteins TolA, TolQ and TolR, the periplasmic protein TolB and the outer membrane protein Pal. They form a network linking the inner and outer membranes and the peptidoglycan layer.

Its subcellular location is the periplasm. In terms of biological role, part of the Tol-Pal system, which plays a role in outer membrane invagination during cell division and is important for maintaining outer membrane integrity. This is Tol-Pal system protein TolB from Xylella fastidiosa (strain Temecula1 / ATCC 700964).